The sequence spans 420 residues: Putative U-box domain-containing protein 58 (420 aa).

The MIF4G domain maps to 4–168 (NSYVLFARLC…EDALAMKKED (165 aa)). Positions 139-352 (SRVVELEGNY…TAKEQMEKRQ (214 aa)) form a coiled coil. One can recognise a U-box domain in the interval 352–420 (QPPSSFFCPI…ALRSAIEELV (69 aa)).

The enzyme catalyses S-ubiquitinyl-[E2 ubiquitin-conjugating enzyme]-L-cysteine + [acceptor protein]-L-lysine = [E2 ubiquitin-conjugating enzyme]-L-cysteine + N(6)-ubiquitinyl-[acceptor protein]-L-lysine.. The protein operates within protein modification; protein ubiquitination. Functions as an E3 ubiquitin ligase. The sequence is that of Putative U-box domain-containing protein 58 (PUB58) from Arabidopsis thaliana (Mouse-ear cress).